Consider the following 174-residue polypeptide: FMN reductase (NADH) SmoA (174 aa).

It belongs to the non-flavoprotein flavin reductase family.

It carries out the reaction FMNH2 + NAD(+) = FMN + NADH + 2 H(+). Part of the sulfoquinovose monooxygenase (sulfo-SMO) pathway, a D-sulfoquinovose degradation pathway that enables the complete utilization of all carbons within sulfoquinovose (SQ) with concomitant production of inorganic sulfite. Catalyzes the NADH-dependent reduction of FMN. FMNH(2) is then transferred to the sulfoquinovose monooxygenase SmoC. The sequence is that of FMN reductase (NADH) SmoA from Agrobacterium fabrum (strain C58 / ATCC 33970) (Agrobacterium tumefaciens (strain C58)).